The chain runs to 489 residues: Ammonium transporter MEP3 (489 aa).

At methionine 1–threonine 17 the chain is on the extracellular side. A helical membrane pass occupies residues valine 18–leucine 38. Over tyrosine 39–alanine 48 the chain is Cytoplasmic. A helical transmembrane segment spans residues leucine 49–tryptophan 69. Residues glycine 70–glutamate 108 lie on the Extracellular side of the membrane. Residues leucine 109–alanine 129 form a helical membrane-spanning segment. At threonine 130 to histidine 139 the chain is on the cytoplasmic side. A helical transmembrane segment spans residues methionine 140–alanine 160. Over proline 161–tryptophan 173 the chain is Extracellular. The helical transmembrane segment at alanine 174 to leucine 194 threads the bilayer. Over glycine 195 to asparagine 209 the chain is Cytoplasmic. A helical transmembrane segment spans residues valine 210–alanine 230. Residues serine 231–serine 239 lie on the Extracellular side of the membrane. The chain crosses the membrane as a helical span at residues valine 240–leucine 260. At aspartate 261–lysine 267 the chain is on the cytoplasmic side. Residues tryptophan 268–serine 288 traverse the membrane as a helical segment. Position 289 (glycine 289) is a topological domain, extracellular. The chain crosses the membrane as a helical span at residues cysteine 290 to alanine 310. The Cytoplasmic segment spans residues threonine 311–glycine 330. The helical transmembrane segment at isoleucine 331 to methionine 351 threads the bilayer. At aspartate 352–glutamine 372 the chain is on the extracellular side. The chain crosses the membrane as a helical span at residues isoleucine 373 to valine 393. At leucine 394 to alanine 489 the chain is on the cytoplasmic side. The span at glycine 448–proline 481 shows a compositional bias: polar residues. The tract at residues glycine 448–alanine 489 is disordered.

The protein belongs to the ammonia transporter channel (TC 1.A.11.2) family.

The protein localises to the membrane. Its function is as follows. Transporter for ammonium (both charged and uncharged NH3 and NH4) to use as a nitrogen source. The affinity of MEP2 is about twenty times higher than that of MEP1. MEP3 has the lowest affinity. In Saccharomyces cerevisiae (strain ATCC 204508 / S288c) (Baker's yeast), this protein is Ammonium transporter MEP3 (MEP3).